Here is a 319-residue protein sequence, read N- to C-terminus: Ribosomal large subunit pseudouridine synthase C (319 aa).

An S4 RNA-binding domain is found at 20–83 (QRIDNFLRTQ…AEREEEAVSP (64 aa)). D144 is a catalytic residue.

The protein belongs to the pseudouridine synthase RluA family.

The catalysed reaction is uridine(955/2504/2580) in 23S rRNA = pseudouridine(955/2504/2580) in 23S rRNA. Responsible for synthesis of pseudouridine from uracil at positions 955, 2504 and 2580 in 23S ribosomal RNA. The chain is Ribosomal large subunit pseudouridine synthase C (rluC) from Escherichia coli O6:H1 (strain CFT073 / ATCC 700928 / UPEC).